The primary structure comprises 184 residues: MSNTIADHVKAILIALGEDPNREGLRDTPKRYEKALEHLTKGYHEKLPSVVKKAVFQSGMDEMVILKDIELYSLCEHHLLPFIGRCHVAYLPSGKIIGISKLARIVDMFAKRLQVQENLTKQIAEAILTATEAKGVGVIIEAKHLCMMMRGVEKQNSEMTTSVMLGTFRKDDRTRSEFLSLIRK.

Cys-75, His-78, and Cys-146 together coordinate Zn(2+).

Belongs to the GTP cyclohydrolase I family. Homomer.

It carries out the reaction GTP + H2O = 7,8-dihydroneopterin 3'-triphosphate + formate + H(+). Its pathway is cofactor biosynthesis; 7,8-dihydroneopterin triphosphate biosynthesis; 7,8-dihydroneopterin triphosphate from GTP: step 1/1. This Coxiella burnetii (strain Dugway 5J108-111) protein is GTP cyclohydrolase 1.